The primary structure comprises 484 residues: Arginyl-tRNA--protein transferase 1 (484 aa).

The protein belongs to the R-transferase family.

The enzyme catalyses an N-terminal L-alpha-aminoacyl-[protein] + L-arginyl-tRNA(Arg) = an N-terminal L-arginyl-L-aminoacyl-[protein] + tRNA(Arg) + H(+). Functionally, involved in the post-translational conjugation of arginine to the N-terminal aspartate or glutamate of a protein. This arginylation is required for degradation of the protein via the ubiquitin pathway. Does not arginylate cysteine residues. The chain is Arginyl-tRNA--protein transferase 1 (Ate1) from Drosophila melanogaster (Fruit fly).